Reading from the N-terminus, the 184-residue chain is MGRPVGQTNQAQPSVQHTASPSNKVSHNGGIGKPANIPTGIPVNYQQTQNQWSSQLFDCMNDSENAVITLIAPCVTFGQIAEIVDEGATPCATAGLLYGALFFTGASFVYSYMFRARIRKKFGLPDAPAPDWITHLVCMPFALCQEYRELKHHGFDPILGWAGNVQQAQQQEMMTPPTGQRMMG.

The segment covering 1 to 26 (MGRPVGQTNQAQPSVQHTASPSNKVS) has biased composition (polar residues). A disordered region spans residues 1–33 (MGRPVGQTNQAQPSVQHTASPSNKVSHNGGIGK). Residues 94–114 (AGLLYGALFFTGASFVYSYMF) form a helical membrane-spanning segment.

Belongs to the cornifelin family.

The protein resides in the membrane. May be involved in heavy metals transport. The protein is Protein PLANT CADMIUM RESISTANCE 5 (PCR5) of Arabidopsis thaliana (Mouse-ear cress).